Here is a 188-residue protein sequence, read N- to C-terminus: Phosphatidylinositol N-acetylglucosaminyltransferase subunit H (188 aa).

The protein belongs to the PIGH family. In terms of assembly, component of the glycosylphosphatidylinositol-N-acetylglucosaminyltransferase (GPI-GnT) complex composed at least by PIGA, PIGC, PIGH, PIGP, PIGQ, PIGY and DPM2. Interacts with PIGQ.

The protein resides in the cytoplasm. It functions in the pathway glycolipid biosynthesis; glycosylphosphatidylinositol-anchor biosynthesis. Part of the glycosylphosphatidylinositol-N-acetylglucosaminyltransferase (GPI-GnT) complex that catalyzes the transfer of N-acetylglucosamine from UDP-N-acetylglucosamine to phosphatidylinositol and participates in the first step of GPI biosynthesis. The chain is Phosphatidylinositol N-acetylglucosaminyltransferase subunit H from Mus musculus (Mouse).